Reading from the N-terminus, the 242-residue chain is UPF0246 protein SPN23F15130 (242 aa).

Belongs to the UPF0246 family.

The sequence is that of UPF0246 protein SPN23F15130 from Streptococcus pneumoniae (strain ATCC 700669 / Spain 23F-1).